Consider the following 766-residue polypeptide: Disabled homolog 2 (766 aa).

The span at 1 to 16 (MSNEVETSTTNGQPDQ) shows a compositional bias: polar residues. A disordered region spans residues 1–36 (MSNEVETSTTNGQPDQQAAPKAPSKKEKKKGSEKTD). Ser2 carries the N-acetylserine modification. The residue at position 2 (Ser2) is a Phosphoserine. In terms of domain architecture, PID spans 45–196 (GDGVKYKAKL…KAEENGSEAL (152 aa)). Position 170 is a phosphotyrosine (Tyr170). Position 193 is a phosphoserine (Ser193). Positions 230–447 (ESKDILLVDL…KPGRGRRTAK (218 aa)) are required for localization to clathrin-coated pits. Disordered regions lie at residues 284–482 (LNFF…NFLD), 596–630 (PPPT…LKDI), 659–683 (RQPP…FSSY), and 699–766 (DFDA…NPFA). 2 short sequence motifs (DPF) span residues 293 to 295 (DPF) and 298 to 300 (DPF). Polar residues-rich tracts occupy residues 303-334 (PDQS…QSKG) and 367-381 (PSSQ…QNGV). Ser323 bears the Phosphoserine mark. 2 positions are modified to phosphoserine; in mitosis: Ser326 and Ser328. Ser401 bears the Phosphoserine mark. A compositionally biased stretch (polar residues) spans 467-480 (MSPTGQPAVPQSNF). Residues 600–612 (MSTQSSPQPMMSS) show a composition bias toward low complexity. Residues 600–730 (MSTQSSPQPM…VLLGTKSADN (131 aa)) are sufficient for interaction with GRB2. The segment at 617–625 (PPQPPPRNG) is required for interaction with CSK. The required for interaction with MYO6 stretch occupies residues 647–766 (KEVKEMFKDF…HRSPFGNPFA (120 aa)). The interval 661-669 (PPLVPSRKG) is required for interaction with GRB2 and CSK. Phosphothreonine is present on Thr671. Polar residues predominate over residues 673-683 (PSGTSSAFSSY). The interval 707 to 723 (NKINEPPKPAPRQGVLL) is sufficient for interaction with SH3KBP1 SH3 domain. 2 positions are modified to phosphoserine: Ser727 and Ser759. A compositionally biased stretch (polar residues) spans 727-753 (SADNSLENPFSKGFSSSNPSVVSQPAS).

In terms of assembly, interacts (via NPXY motif) with DAB2 (via PID domain). Can interact (via PID domain) with LDLR, APP, APLP1 and APLP2, and weakly with INPP5D (via NPXY motifs); the interaction is impaired by tyrosine phosphorylation of the respective NPXY motifs. Can weakly interact (via PID domain) with LRP1 (via NPXY motif); the interaction is enhanced by tyrosine phosphorylation of the NPXY motif. Interacts with LRP2 (via NPXY motif); the interaction is not affected by tyrosine phosphorylation of the NPXY motif. Interacts with clathrin; in vitro can assemble clathrin triskelia into polyhedral coats. Interacts with AP2A2, ITGB1, ITGB3, ITGB5, PIAS2, DAB2IP, NOSTRIN, FCHO1, DVL3 and EPS15L1. Interacts with SH3KBP1 (via SH3 domains). Interacts with GRB2; competes with SOS1 for binding to GRB2 and the interaction is enhanced by EGF and NT-3 stimulation. Isoform p96 interacts with EPS15 and ITSN1; isoform p67 does not interact with EPS15 and only weakly interacts with ITSN1. Interacts with MAP3K7; the interaction is induced by TGF-beta stimulation and may mediate TGF-beta stimulated JNK activation. Interacts with AXIN1 and PPP1CA; the interactions are mutually exclusive. Interacts with the globular tail of MYO6. Interacts (via DPF motifs) with FCHO2; the interaction is direct and required for DAB2-mediated LDLR endocytosis. Interacts with LRP6; the interaction involves LRP6 phosphorylation by CK2 and sequesters LRP6 towards clathrin-mediated endocytosis. Associates with the TGF-beta receptor complex. Interacts with SMAD2 and SMAD3; the interactions are enhanced upon TGF-beta stimulation. Interacts with GRB2; the interaction is enhanced by EGF and NT-3 stimulation. Interacts with SRC; the interaction is enhanced by EGF stimulation. In terms of processing, phosphorylated on serine residues in response to mitogenic growth-factor stimulation. Phosphorylation during mitosis is leading to membrane displacement. Isoform p96 and isoform p67 are expressed in adult kidney and fibroblasts with isoform p96 being the predominant form. Isoform p67 is the predominant isoform expressed in embryonic visceral endoderm.

Its subcellular location is the cytoplasmic vesicle. The protein localises to the clathrin-coated vesicle membrane. It localises to the membrane. It is found in the clathrin-coated pit. The protein resides in the cytoplasm. Its subcellular location is the nucleus. Its function is as follows. Adapter protein that functions as a clathrin-associated sorting protein (CLASP) required for clathrin-mediated endocytosis of selected cargo proteins. Can bind and assemble clathrin, and binds simultaneously to phosphatidylinositol 4,5-bisphosphate (PtdIns(4,5)P2) and cargos containing non-phosphorylated NPXY internalization motifs, such as the LDL receptor, to recruit them to clathrin-coated pits. Can function in clathrin-mediated endocytosis independently of the AP-2 complex. Involved in endocytosis of integrin beta-1; this function seems to redundant with the AP-2 complex and seems to require DAB2 binding to endocytosis accessory EH domain-containing proteins such as EPS15, EPS15L1 and ITSN1. Involved in endocytosis of cystic fibrosis transmembrane conductance regulator/CFTR. Isoform p96 is involved in endocytosis of megalin/LRP2 lipoprotein receptor during embryonal development. Required for recycling of the TGF-beta receptor. Isoform p67 is not involved in LDL receptor endocytosis. Involved in CFTR trafficking to the late endosome. Involved in several receptor-mediated signaling pathways. Involved in TGF-beta receptor signaling and facilitates phosphorylation of the signal transducer SMAD2. Mediates TFG-beta-stimulated JNK activation. May inhibit the canoniocal Wnt/beta-catenin signaling pathway by stabilizing the beta-catenin destruction complex through a competing association with axin preventing its dephosphorylation through protein phosphatase 1 (PP1). Sequesters LRP6 towards clathrin-mediated endocytosis, leading to inhibition of Wnt/beta-catenin signaling. May activate non-canonical Wnt signaling. In cell surface growth factor/Ras signaling pathways proposed to inhibit ERK activation by interrupting the binding of GRB2 to SOS1 and to inhibit SRC by preventing its activating phosphorylation at 'Tyr-419'. Proposed to be involved in modulation of androgen receptor (AR) signaling mediated by SRC activation; seems to compete with AR for interaction with SRC. Plays a role in the CSF-1 signal transduction pathway. Plays a role in cellular differentiation. Involved in cell positioning and formation of visceral endoderm (VE) during embryogenesis and proposed to be required in the VE to respond to Nodal signaling coming from the epiblast. Required for the epithelial to mesenchymal transition, a process necessary for proper embryonic development. May be involved in myeloid cell differentiation and can induce macrophage adhesion and spreading. Isoform p67 may be involved in transcriptional regulation. May act as a tumor suppressor. This is Disabled homolog 2 (Dab2) from Mus musculus (Mouse).